Here is a 672-residue protein sequence, read N- to C-terminus: Nuclear RNA export factor 1 (672 aa).

2 disordered regions span residues 1–52 (MPKR…SFKP) and 73–101 (DEDDDMSDMTTAVKDRPTSRRRGSPIPRG). A compositionally biased stretch (basic residues) spans 40-49 (RKDRNKRRVS). Residues 113–193 (WYQVTLQNAQ…PRVRSGIPLV (81 aa)) enclose the RRM domain. LRR repeat units follow at residues 255 to 280 (DLEALNLNDNSISSMEAFKGVEKRLP), 281 to 304 (NLKILYLGDNKIPSLAHLVVLRNL), 305 to 332 (SILELVLKNNPCRSRYKDSQQFISEVRR), and 333 to 360 (KFPKLVKLDGETLEPQITFDLSEQGRLL). The NTF2 domain occupies 375 to 529 (VVRQFLDQYF…FCIRNETIFI (155 aa)). The segment at 541 to 564 (KRSQHQPAPGAMPSTSSAVTSPQA) is disordered. The segment covering 553–563 (PSTSSAVTSPQ) has biased composition (polar residues). Phosphoserine is present on S561. Residues 618–672 (STKMQMIEAMSAQSQMNVIWSRKCLEETNWDFNHAAFVFEKLFKENKIPPEAFMK) form the TAP-C domain.

Belongs to the NXF family. As to quaternary structure, interacts with Nxt1. Interacts with ZC3H3. Forms a complex with Nup358/RanBP2, RanGAP and Nxt1. Interacts with Nup54 and Nup58. Interacts with Orc3 and Hpr1. Expressed ubiquitously.

It localises to the nucleus. The protein resides in the nucleoplasm. It is found in the cytoplasm. Its subcellular location is the nucleus envelope. Its function is as follows. Mediates the export of the majority of mRNAs from the nucleus to the cytoplasm. In ovarian follicle cells, plays a role in transposable element silencing regulation by enabling the nuclear export of flamenco (flam) transcripts and subsequent piRNA biogenesis. In Drosophila melanogaster (Fruit fly), this protein is Nuclear RNA export factor 1.